A 233-amino-acid chain; its full sequence is LexA repressor (233 aa).

Positions 26-46 (FDEMKEALDLRSKSGIHRLIT) form a DNA-binding region, H-T-H motif. Catalysis depends on for autocatalytic cleavage activity residues Ser-154 and Lys-192.

This sequence belongs to the peptidase S24 family. As to quaternary structure, homodimer.

It catalyses the reaction Hydrolysis of Ala-|-Gly bond in repressor LexA.. In terms of biological role, represses a number of genes involved in the response to DNA damage (SOS response), including recA and lexA. In the presence of single-stranded DNA, RecA interacts with LexA causing an autocatalytic cleavage which disrupts the DNA-binding part of LexA, leading to derepression of the SOS regulon and eventually DNA repair. The chain is LexA repressor from Roseobacter denitrificans (strain ATCC 33942 / OCh 114) (Erythrobacter sp. (strain OCh 114)).